A 255-amino-acid polypeptide reads, in one-letter code: uncharacterized protein (255 aa).

It belongs to the methyltransferase superfamily.

This is an uncharacterized protein from Mycolicibacterium paratuberculosis (strain ATCC BAA-968 / K-10) (Mycobacterium paratuberculosis).